An 86-amino-acid polypeptide reads, in one-letter code: Weak toxin 3 (86 aa).

Residues 1-23 form the signal peptide; it reads MKTLLLTLVVVTIVCLDLGYTLT. Disulfide bonds link cysteine 24–cysteine 45, cysteine 27–cysteine 32, cysteine 38–cysteine 63, cysteine 67–cysteine 78, and cysteine 79–cysteine 84.

This sequence belongs to the three-finger toxin family. Ancestral subfamily. Orphan group II sub-subfamily. In terms of tissue distribution, expressed by the venom gland.

The protein localises to the secreted. Its function is as follows. Binds with low affinity to muscular (alpha-1-beta-1-delta-epsilon/CHRNA1-CHRNB1-CHRND-CHRNE) and very low affinity to neuronal (alpha-7/CHRNA7) nicotinic acetylcholine receptor (nAChR). The polypeptide is Weak toxin 3 (Bungarus candidus (Malayan krait)).